The sequence spans 121 residues: Basic phospholipase A2 homolog zhaoermiatoxin (121 aa).

7 disulfides stabilise this stretch: Cys26/Cys115, Cys28/Cys44, Cys43/Cys95, Cys49/Cys121, Cys50/Cys88, Cys57/Cys81, and Cys75/Cys86.

Belongs to the phospholipase A2 family. Group II subfamily. R49 sub-subfamily. As to quaternary structure, homodimer. In terms of tissue distribution, expressed by the venom gland.

The protein localises to the secreted. Functionally, snake venom phospholipase A2 homolog that induces myonecrosis, and edema. Has low myotoxic activity. The polypeptide is Basic phospholipase A2 homolog zhaoermiatoxin (Protobothrops mangshanensis (Mangshan pitviper)).